The sequence spans 297 residues: MTSYDDKLDASLDLMRRLDPKNITKNLNDICTLIQNDGSETSEELTQDLLSSVDVPLRTQKCDETGKEYLCCDYNRDGDSYRSPWSNKYFPVVAQDSDELPPPFPSNILRELEVKANDSFDIYRDLYYEGAGTSSVYFWDTNEEDDEQETLDNGFAGVVLFKKETEDGSGKWDSIHVIEVIPEASSNATYKVTSSVILDLQNKKSSSLSLAGSLTRQLELTQSLSLDSALNVETAHLINLGTLIEKSEYNLRNLLQDVYFDKLRDIVMKDLRSVGDLSGKESDDKRQSELVKGLQSL.

Residues 276 to 289 (DLSGKESDDKRQSE) show a composition bias toward basic and acidic residues. Residues 276–297 (DLSGKESDDKRQSELVKGLQSL) are disordered.

Belongs to the F-actin-capping protein beta subunit family. In terms of assembly, component of the F-actin capping complex, composed of a heterodimer of an alpha and a beta subunit.

The protein localises to the cytoplasm. Its subcellular location is the cytoskeleton. It is found in the actin patch. In terms of biological role, F-actin-capping proteins bind in a Ca(2+)-independent manner to the fast growing ends of actin filaments (barbed end) thereby blocking the exchange of subunits at these ends. Unlike other capping proteins (such as gelsolin and severin), these proteins do not sever actin filaments. This is F-actin-capping protein subunit beta (CAP2) from Debaryomyces hansenii (strain ATCC 36239 / CBS 767 / BCRC 21394 / JCM 1990 / NBRC 0083 / IGC 2968) (Yeast).